Consider the following 288-residue polypeptide: Dichloromethane dehalogenase (288 aa).

The region spanning 12–94 is the GST N-terminal domain; sequence KTLRLLYHPA…YVNEKFDGAG (83 aa). Residues 100–252 form the GST C-terminal domain; that stretch reads GTQERAQINQ…ASMFKRKTAV (153 aa).

Belongs to the GST superfamily. In terms of assembly, homohexamer.

Its subcellular location is the cytoplasm. It catalyses the reaction dichloromethane + H2O = formaldehyde + 2 chloride + 2 H(+). Its pathway is xenobiotic degradation; dichloromethane degradation. The sequence is that of Dichloromethane dehalogenase (dcmA) from Methylorubrum extorquens (strain DSM 6343 / CIP 106787 / DM4) (Methylobacterium extorquens).